A 277-amino-acid chain; its full sequence is MKQYLDLLRHVREHGTYKEDRTGTGTYAVFGYQMRYDLSQGFPMLTTKKLHLRSIIHELLWFLSGDTNIRYLKENGVSIWDGWATPEGELGPVYGEQWRSWKTADGGVIDQITEVLKEIKRNPDSRRLVVSAWNPAVLPDPSISPDANAAAGKQALPPCHCLFQFYVADGKLSCQLYQRSGDIFLGVPFNIASYALLTLMMAQVCDLQPGDFVHTLGDAHLYSNHLEQADTQLARTPGPLPTMTLNPAVKDLFAFTFDDFTVSNYNPDAHIKAPVAI.

Arg21 serves as a coordination point for dUMP. His51 is a binding site for (6R)-5,10-methylene-5,6,7,8-tetrahydrofolate. DUMP is bound at residue 126–127 (RR). The active-site Nucleophile is Cys159. Residues 179–182 (RSGD), Asn190, and 220–222 (HLY) each bind dUMP. Position 182 (Asp182) interacts with (6R)-5,10-methylene-5,6,7,8-tetrahydrofolate. Ala276 contacts (6R)-5,10-methylene-5,6,7,8-tetrahydrofolate.

The protein belongs to the thymidylate synthase family. Bacterial-type ThyA subfamily. In terms of assembly, homodimer.

Its subcellular location is the cytoplasm. The enzyme catalyses dUMP + (6R)-5,10-methylene-5,6,7,8-tetrahydrofolate = 7,8-dihydrofolate + dTMP. The protein operates within pyrimidine metabolism; dTTP biosynthesis. Catalyzes the reductive methylation of 2'-deoxyuridine-5'-monophosphate (dUMP) to 2'-deoxythymidine-5'-monophosphate (dTMP) while utilizing 5,10-methylenetetrahydrofolate (mTHF) as the methyl donor and reductant in the reaction, yielding dihydrofolate (DHF) as a by-product. This enzymatic reaction provides an intracellular de novo source of dTMP, an essential precursor for DNA biosynthesis. This chain is Thymidylate synthase, found in Alcanivorax borkumensis (strain ATCC 700651 / DSM 11573 / NCIMB 13689 / SK2).